Here is a 1309-residue protein sequence, read N- to C-terminus: DNA repair protein RAD9 (1309 aa).

Over residues 1–19 the composition is skewed to polar residues; it reads MSGQLVQWKSSPDRVTQSA. Positions 1–39 are disordered; that stretch reads MSGQLVQWKSSPDRVTQSAIKEALHSPLADGDMNEMNVP. Residues Ser-26, Ser-56, and Ser-205 each carry the phosphoserine modification. Phosphothreonine is present on Thr-218. Phosphoserine is present on Ser-248. Residues 280–299 form a disordered region; that stretch reads NIGAIEEKNPVKKKSENYSS. Over residues 284–299 the composition is skewed to basic and acidic residues; it reads IEEKNPVKKKSENYSS. Phosphoserine occurs at positions 312 and 315. The segment at 342–365 is disordered; the sequence is NSAVSGTPSRNNAEEEMYSSESVN. Residues 343–352 show a composition bias toward polar residues; sequence SAVSGTPSRN. Ser-462 is subject to Phosphoserine. Phosphothreonine occurs at positions 471 and 474. Positions 490-512 are disordered; it reads PETSSPSKNTMSKPSNSSPIPKE. Positions 491 to 508 are enriched in polar residues; it reads ETSSPSKNTMSKPSNSSP. Residue Ser-568 is modified to Phosphoserine. Disordered stretches follow at residues 636 to 655 and 691 to 731; these read KGNS…DKQD and IIQN…NSDL. Positions 642–655 are enriched in basic and acidic residues; that stretch reads LHDDNKECNSDKQD. Ser-729 carries the post-translational modification Phosphoserine. The BRCT domain maps to 994-1122; the sequence is RTGNVFDKCI…RIVPHLIYQY (129 aa).

As to quaternary structure, physically associates with RAD53.

Its subcellular location is the nucleus. Functionally, essential for cell cycle arrest at the G2 stage following DNA damage by X-irradiation or inactivation of DNA ligase. The protein is DNA repair protein RAD9 (RAD9) of Saccharomyces cerevisiae (strain ATCC 204508 / S288c) (Baker's yeast).